The chain runs to 324 residues: ATP phosphoribosyltransferase regulatory subunit (324 aa).

Belongs to the class-II aminoacyl-tRNA synthetase family. HisZ subfamily. As to quaternary structure, heteromultimer composed of HisG and HisZ subunits.

Its subcellular location is the cytoplasm. The protein operates within amino-acid biosynthesis; L-histidine biosynthesis; L-histidine from 5-phospho-alpha-D-ribose 1-diphosphate: step 1/9. Required for the first step of histidine biosynthesis. May allow the feedback regulation of ATP phosphoribosyltransferase activity by histidine. This is ATP phosphoribosyltransferase regulatory subunit from Carboxydothermus hydrogenoformans (strain ATCC BAA-161 / DSM 6008 / Z-2901).